We begin with the raw amino-acid sequence, 78 residues long: Defensin-like protein 171 (78 aa).

Positions 1–23 (MAKTASSLVLPIIFLVMFALVEQ) are cleaved as a signal peptide. 4 disulfides stabilise this stretch: C27–C71, C34–C56, C40–C65, and C44–C67.

The protein belongs to the DEFL family.

Its subcellular location is the secreted. The chain is Defensin-like protein 171 (LCR61) from Arabidopsis thaliana (Mouse-ear cress).